The primary structure comprises 2235 residues: Bridge-like lipid transfer protein family member 2 (2235 aa).

An N-terminal signal peptide occupies residues M1–T31. Residues L29–P108 are transmembrane domain. S563 is modified (phosphoserine). N730 carries an N-linked (GlcNAc...) asparagine glycan. The segment at P1495–S1529 is disordered. A coiled-coil region spans residues S1813–D1885. 3 positions are modified to phosphoserine: S1846, S2090, and S2094. Positions G2074–V2099 are disordered.

This sequence belongs to the SABRE family. As to expression, expressed in pancreas, placenta and up-regulated in breast carcinoma epithelial cells, ductal in situ carcinoma (DCIS), invasive breast carcinoma (IBC) and metastatic breast carcinoma cells (MET).

It localises to the cell membrane. It is found in the endoplasmic reticulum membrane. Its subcellular location is the mitochondrion membrane. Its function is as follows. Tube-forming lipid transport protein which binds to phosphatidylinositols and affects phosphatidylinositol-4,5-bisphosphate (PtdIns-4,5-P2) distribution. This is Bridge-like lipid transfer protein family member 2 from Homo sapiens (Human).